The chain runs to 798 residues: Integrin beta-1 (798 aa).

Positions 1–20 are cleaved as a signal peptide; sequence MNLQLIFWIGLISSVCYVFG. Residues 21 to 728 lie on the Extracellular side of the membrane; it reads QADENRCLKA…ETPECPTGPD (708 aa). Residues 26–76 enclose the PSI domain; that stretch reads RCLKANAKSCGECIQAGPNCGWCTNSTFLQEGMPTSARCDDLEALRKKGCH. Disulfide bonds link cysteine 27/cysteine 45, cysteine 35/cysteine 464, cysteine 38/cysteine 64, cysteine 48/cysteine 75, cysteine 207/cysteine 213, cysteine 261/cysteine 301, cysteine 401/cysteine 415, cysteine 435/cysteine 462, cysteine 466/cysteine 486, cysteine 477/cysteine 489, cysteine 491/cysteine 500, cysteine 502/cysteine 533, cysteine 516/cysteine 531, cysteine 525/cysteine 536, cysteine 538/cysteine 553, cysteine 555/cysteine 576, cysteine 560/cysteine 574, cysteine 568/cysteine 579, cysteine 581/cysteine 590, cysteine 592/cysteine 615, cysteine 599/cysteine 613, cysteine 607/cysteine 618, cysteine 620/cysteine 630, cysteine 633/cysteine 636, cysteine 640/cysteine 691, cysteine 646/cysteine 665, cysteine 649/cysteine 661, and cysteine 699/cysteine 723. An N-linked (GlcNAc...) asparagine glycan is attached at asparagine 50. Residues 75–84 show a composition bias toward basic and acidic residues; it reads CHPDDIENPR. A disordered region spans residues 75-107; sequence CHPDDIENPRGSKNIKKNKNVTNRSKGTAEKLQ. Asparagine 94 and asparagine 97 each carry an N-linked (GlcNAc...) asparagine glycan. The 239-residue stretch at 140-378 folds into the VWFA domain; it reads DYPIDLYYLM…QLIIDAYNSL (239 aa). Residues serine 152 and serine 154 each coordinate Mg(2+). The Ca(2+) site is built by serine 154, aspartate 157, aspartate 158, and glutamate 189. The CX3CL1-binding stretch occupies residues 207-213; sequence CTSEQNC. N-linked (GlcNAc...) asparagine glycosylation occurs at asparagine 212. The Ca(2+) site is built by asparagine 244, aspartate 246, proline 248, and glutamate 249. Residue glutamate 249 coordinates Mg(2+). The N-linked (GlcNAc...) asparagine glycan is linked to asparagine 269. The segment at 295–314 is CX3CL1-binding; sequence LPNDGHCHLENDVYTMSHYY. Alanine 362 provides a ligand contact to Ca(2+). Residues asparagine 363, asparagine 406, and asparagine 417 are each glycosylated (N-linked (GlcNAc...) asparagine). An interaction with TMEM182 region spans residues 383–465; that stretch reads ILENSKLPEG…IILQFICECE (83 aa). I-EGF domains are found at residues 466-501, 502-554, 555-591, and 592-631; these read CQSEGIPSSPKCHDGNGTFECGACRCNEGRVGRHCE, CSTD…KFCE, CDNFNCDRSNGLICGGNGVCKCRVCECNPNYTGSACD, and CSLDTTSCMAVNGQICNGRGVCECGVCKCTDPKFQGPTCE. An N-linked (GlcNAc...) asparagine glycan is attached at asparagine 481. The N-linked (GlcNAc...) asparagine glycan is linked to asparagine 520. A glycan (N-linked (GlcNAc...) asparagine) is linked at asparagine 584. N-linked (GlcNAc...) asparagine glycosylation occurs at asparagine 669. A helical membrane pass occupies residues 729-749; sequence IIPIVAGVVAGIVLIGLALLL. Topologically, residues 750–798 are cytoplasmic; it reads IWKLLMIIHDRREFAKFEKEKMNAKWDTGENPIYKSAVTTVVNPKYEGK. The interval 762 to 767 is signal for sorting from recycling endosomes; interaction with ACAP1; the sequence is EFAKFE. Threonine 777 bears the Phosphothreonine mark. The residue at position 783 (tyrosine 783) is a Phosphotyrosine. A Phosphoserine modification is found at serine 785. Residues 785–792 are interaction with ITGB1BP1; sequence SAVTTVVN. Position 789 is a phosphothreonine (threonine 789). Lysine 794 carries the N6-acetyllysine; alternate modification. Residue lysine 794 forms a Glycyl lysine isopeptide (Lys-Gly) (interchain with G-Cter in SUMO1); alternate linkage.

It belongs to the integrin beta chain family. In terms of assembly, interacts with seprase FAP (seprase); the interaction occurs at the cell surface of invadopodia membrane in a collagen-dependent manner. Heterodimer of an alpha and a beta subunit. Beta-1 associates with either alpha-1, alpha-2, alpha-3, alpha-4, alpha-5, alpha-6, alpha-7, alpha-8, alpha-9, alpha-10, alpha-11 or alpha-V. ITGA6:ITGB1 is found in a complex with CD9; interaction takes place in oocytes and is involved in sperm-egg fusion. Binds LGALS3BP and NMRK2, when associated with alpha-7, but not with alpha-5. Interacts with FLNA, FLNB, FLNC and RANBP9. Interacts with KRT1 in the presence of RACK1 and SRC. Interacts with JAML; integrin alpha-4/beta-1 may regulate leukocyte to endothelial cells adhesion by controlling JAML homodimerization. Interacts with RAB21. Interacts (via the cytoplasmic region) with RAB25 (via the hypervariable C-terminal region). Interacts with MYO10. Interacts with ITGB1BP1 (via C-terminal region); the interaction is a prerequisite for focal adhesion disassembly. Interacts with TLN1; the interaction is prevented by competitive binding of ITGB1BP1. Interacts with ACAP1; required for ITGB1 recycling. Interacts with ASAP3. Interacts with FERMT2; the interaction is inhibited in presence of ITGB1BP1. Interacts with DAB2. Interacts with FGR and HCK. Interacts with alpha-7A and alpha-7B in adult skeletal muscle. Interacts with alpha-7B in cardiomyocytes of adult heart. Interacts with EMP2; the interaction may be direct or indirect and ITGB1 has a heterodimer form. ITGA5:ITGB1 interacts with CCN3. ITGA4:ITGB1 is found in a ternary complex with CX3CR1 and CX3CL1. ITGA5:ITGB1 interacts with FBN1. ITGA5:ITGB1 interacts with IL1B. Interacts with MDK. ITGA4:ITGB1 interacts with MDK; this interaction mediates MDK-induced osteoblast cells migration through PXN phosphorylation. ITGA6:ITGB1 interacts with MDK; this interaction mediates MDK-induced neurite-outgrowth. ITGA5:ITGB1 interacts with ACE2. Interacts with TMEM182 and LAMB1. Interacts with tensin TNS3; TNS3 also interacts with PEAK1, thus acting as an adapter molecule to bridge the association of PEAK1 with ITGB1. Interacts with tensin TNS4; the interaction displaces tensin TNS3 from the ITGB1 cytoplasmic tail and promotes ITGB1 stability. Integrin ITGA9:ITGB1 interacts with SPP1/OPN (via N-terminus). Integrin ITGA9:ITGB1 interacts with TNC/TNFN3 (via the 3rd Fibronectin type-III domain). Integrins ITGA4:ITGB1 and ITGA9:ITGB1 interact with SVEP1 (via Sushi domain 21); thereby inhibit Ca(2+) intracellular signaling and as a result repress vasocontraction. ITGA4:ITGB1 and ITGA5:ITGB1 interacts with SELP. Interacts with CD248. ITGA5:ITGB1 interacts with IGFBP1. ITGA4:ITGB1 interacts with BCAM. Interacts with ADGRG6. As to expression, expressed in the spleen, thymus, alveolar macrophages, bone marrow, liver and kidney.

Its subcellular location is the cell membrane. It is found in the cell projection. It localises to the invadopodium membrane. The protein resides in the ruffle membrane. The protein localises to the recycling endosome. Its subcellular location is the melanosome. It is found in the lamellipodium. It localises to the ruffle. The protein resides in the cell junction. The protein localises to the focal adhesion. Integrins alpha-1/beta-1, alpha-2/beta-1, alpha-10/beta-1 and alpha-11/beta-1 are receptors for collagen. Integrins alpha-1/beta-1 and alpha-2/beta-2 recognize the proline-hydroxylated sequence G-F-P-G-E-R in collagen. Integrins alpha-2/beta-1, alpha-3/beta-1, alpha-4/beta-1, alpha-5/beta-1, alpha-8/beta-1, alpha-10/beta-1, alpha-11/beta-1 and alpha-V/beta-1 are receptors for fibronectin. Alpha-4/beta-1 recognizes one or more domains within the alternatively spliced CS-1 and CS-5 regions of fibronectin. Integrin alpha-5/beta-1 is a receptor for fibrinogen. Integrin alpha-1/beta-1, alpha-2/beta-1, alpha-6/beta-1 and alpha-7/beta-1 are receptors for lamimin. Integrin alpha-6/beta-1 (ITGA6:ITGB1) is present in oocytes and is involved in sperm-egg fusion. Integrin alpha-4/beta-1 is a receptor for VCAM1 and recognizes the sequence Q-I-D-S in VCAM1. Integrin alpha-9/beta-1 is a receptor for VCAM1, cytotactin and osteopontin. It recognizes the sequence A-E-I-D-G-I-E-L in cytotactin. Integrin alpha-3/beta-1 is a receptor for epiligrin, thrombospondin and CSPG4. Integrin alpha-3/beta-1 provides a docking site for FAP (seprase) at invadopodia plasma membranes in a collagen-dependent manner and hence may participate in the adhesion, formation of invadopodia and matrix degradation processes, promoting cell invasion. Alpha-3/beta-1 may mediate with LGALS3 the stimulation by CSPG4 of endothelial cells migration. Integrin alpha-V/beta-1 is a receptor for vitronectin. Beta-1 integrins recognize the sequence R-G-D in a wide array of ligands. When associated with alpha-7/beta-1 integrin, regulates cell adhesion and laminin matrix deposition. Involved in promoting endothelial cell motility and angiogenesis. Involved in osteoblast compaction through the fibronectin fibrillogenesis cell-mediated matrix assembly process and the formation of mineralized bone nodules. May be involved in up-regulation of the activity of kinases such as PKC via binding to KRT1. Together with KRT1 and RACK1, serves as a platform for SRC activation or inactivation. Plays a mechanistic adhesive role during telophase, required for the successful completion of cytokinesis. ITGA4:ITGB1 binds to fractalkine (CX3CL1) and may act as its coreceptor in CX3CR1-dependent fractalkine signaling. ITGA4:ITGB1 and ITGA5:ITGB1 bind to PLA2G2A via a site (site 2) which is distinct from the classical ligand-binding site (site 1) and this induces integrin conformational changes and enhanced ligand binding to site 1. ITGA5:ITGB1 acts as a receptor for fibrillin-1 (FBN1) and mediates R-G-D-dependent cell adhesion to FBN1. ITGA5:ITGB1 acts as a receptor for fibronectin FN1 and mediates R-G-D-dependent cell adhesion to FN1. ITGA5:ITGB1 is a receptor for IL1B and binding is essential for IL1B signaling. ITGA5:ITGB3 is a receptor for soluble CD40LG and is required for CD40/CD40LG signaling. Plays an important role in myoblast differentiation and fusion during skeletal myogenesis. ITGA9:ITGB1 may play a crucial role in SVEP1/polydom-mediated myoblast cell adhesion. Integrins ITGA9:ITGB1 and ITGA4:ITGB1 repress PRKCA-mediated L-type voltage-gated channel Ca(2+) influx and ROCK-mediated calcium sensitivity in vascular smooth muscle cells via their interaction with SVEP1, thereby inhibit vasocontraction. This chain is Integrin beta-1 (ITGB1), found in Sus scrofa (Pig).